The chain runs to 255 residues: 5-oxoprolinase subunit A 2 (255 aa).

It belongs to the LamB/PxpA family. As to quaternary structure, forms a complex composed of PxpA, PxpB and PxpC.

It carries out the reaction 5-oxo-L-proline + ATP + 2 H2O = L-glutamate + ADP + phosphate + H(+). Its function is as follows. Catalyzes the cleavage of 5-oxoproline to form L-glutamate coupled to the hydrolysis of ATP to ADP and inorganic phosphate. The protein is 5-oxoprolinase subunit A 2 of Agrobacterium fabrum (strain C58 / ATCC 33970) (Agrobacterium tumefaciens (strain C58)).